Here is a 158-residue protein sequence, read N- to C-terminus: Transcriptional repressor NrdR (158 aa).

Positions 1–22 (MRCPFCGSDDTQVKDSRPAEDN) are disordered. A zinc finger lies at 3–34 (CPFCGSDDTQVKDSRPAEDNSAIRRRRICPDC). Residues 11-22 (TQVKDSRPAEDN) show a composition bias toward basic and acidic residues. Residues 49 to 139 (LTVLKKTGRK…VYRDFSHAED (91 aa)) enclose the ATP-cone domain.

This sequence belongs to the NrdR family. Requires Zn(2+) as cofactor.

In terms of biological role, negatively regulates transcription of bacterial ribonucleotide reductase nrd genes and operons by binding to NrdR-boxes. The chain is Transcriptional repressor NrdR from Allorhizobium ampelinum (strain ATCC BAA-846 / DSM 112012 / S4) (Agrobacterium vitis (strain S4)).